A 556-amino-acid chain; its full sequence is 2-succinyl-5-enolpyruvyl-6-hydroxy-3-cyclohexene-1-carboxylate synthase (556 aa).

It belongs to the TPP enzyme family. MenD subfamily. Homodimer. Mg(2+) serves as cofactor. Mn(2+) is required as a cofactor. The cofactor is thiamine diphosphate.

The enzyme catalyses isochorismate + 2-oxoglutarate + H(+) = 5-enolpyruvoyl-6-hydroxy-2-succinyl-cyclohex-3-ene-1-carboxylate + CO2. It participates in quinol/quinone metabolism; 1,4-dihydroxy-2-naphthoate biosynthesis; 1,4-dihydroxy-2-naphthoate from chorismate: step 2/7. It functions in the pathway quinol/quinone metabolism; menaquinone biosynthesis. Functionally, catalyzes the thiamine diphosphate-dependent decarboxylation of 2-oxoglutarate and the subsequent addition of the resulting succinic semialdehyde-thiamine pyrophosphate anion to isochorismate to yield 2-succinyl-5-enolpyruvyl-6-hydroxy-3-cyclohexene-1-carboxylate (SEPHCHC). This is 2-succinyl-5-enolpyruvyl-6-hydroxy-3-cyclohexene-1-carboxylate synthase from Escherichia coli O157:H7.